A 315-amino-acid chain; its full sequence is Neuroguidin (315 aa).

2 disordered regions span residues 127–201 (SEND…KQKR) and 289–315 (VQDI…RKRK). Composition is skewed to basic and acidic residues over residues 159-168 (KTKEQKEPSG) and 182-200 (YDGD…EKQK). Positions 181–206 (HYDGDLTEADRQKERVEKQKRAALRS) form a coiled coil. The span at 296–315 (KPKKKKIIKKGKKKVFRKRK) shows a compositional bias: basic residues.

This sequence belongs to the SAS10 family. As to quaternary structure, part of the small subunit (SSU) processome, composed of more than 70 proteins and the RNA chaperone small nucleolar RNA (snoRNA) U3.

It localises to the nucleus. The protein resides in the nucleolus. It is found in the chromosome. Its subcellular location is the centromere. The protein localises to the cytoplasm. It localises to the cell projection. The protein resides in the axon. It is found in the dendrite. Its subcellular location is the filopodium. Functionally, part of the small subunit (SSU) processome, first precursor of the small eukaryotic ribosomal subunit. During the assembly of the SSU processome in the nucleolus, many ribosome biogenesis factors, an RNA chaperone and ribosomal proteins associate with the nascent pre-rRNA and work in concert to generate RNA folding, modifications, rearrangements and cleavage as well as targeted degradation of pre-ribosomal RNA by the RNA exosome. Its dissociation from the complex determines the transition from state pre-A1 to state pre-A1*. May inhibit mRNA translation. The protein is Neuroguidin (ngdn) of Danio rerio (Zebrafish).